The sequence spans 4239 residues: Tenellin synthetase (4239 aa).

Residues 15-454 enclose the Ketosynthase family 3 (KS3) domain; it reads SEPIAIIGSA…GTNAHAIIER (440 aa). Active-site for beta-ketoacyl synthase activity residues include cysteine 189, histidine 326, and histidine 374. Residues 589–923 form a malonyl-CoA:ACP transacylase (MAT) domain region; it reads VFTGQGAQWP…ANDAVAFSTA (335 aa). The N-terminal hotdog fold stretch occupies residues 993 to 1135; that stretch reads HELLGRRTPD…GRIAVQLGAK (143 aa). A dehydratase (DH) domain region spans residues 993-1310; that stretch reads HELLGRRTPD…GFEVRAVGEP (318 aa). In terms of domain architecture, PKS/mFAS DH spans 993–1313; that stretch reads HELLGRRTPD…VRAVGEPDAS (321 aa). Histidine 1025 acts as the Proton acceptor; for dehydratase activity in catalysis. The interval 1158–1313 is C-terminal hotdog fold; it reads LQQLDCEKLY…VRAVGEPDAS (156 aa). Aspartate 1217 (proton donor; for dehydratase activity) is an active-site residue. The segment at 1459–1652 is methyltransferase (MT) domain; sequence RLYTEDKGMH…FSGVDHIVHD (194 aa). Residues 2209–2382 are ketoreductase (KR) domain; it reads TYLMVGAAGG…AASIIHVGHV (174 aa). The Carrier 1 domain maps to 2502-2582; it reads EAAVAALKGF…QLSALAAKLA (81 aa). Serine 2542 bears the O-(pantetheine 4'-phosphoryl)serine mark. Disordered stretches follow at residues 2587–2629 and 2642–2712; these read KKRA…EIAQ and LEAS…FFTQ. 2 stretches are compositionally biased toward polar residues: residues 2648 to 2662 and 2670 to 2681; these read GGSSTANLTTSSSVS and ESTLQSSDNNGE. Low complexity predominate over residues 2682-2698; sequence STPSKSSNCNSDSGSDN. The interval 2723–3169 is condensation (C) domain; the sequence is REAPMSPAQS…SAQSVGDCVV (447 aa). The adenylation (A) (KR) domain stretch occupies residues 3203 to 3614; the sequence is CQQHSTKSAI…DGTLLCFGRI (412 aa). Residues 3728–3752 form a disordered region; the sequence is EAAAATSPSNNNINNNTPSGGGGEK. The span at 3729–3745 shows a compositional bias: low complexity; that stretch reads AAAATSPSNNNINNNTP. A Carrier 2 domain is found at 3751 to 3835; sequence EKMTVRQGEL…GMARCVAEQR (85 aa). Serine 3795 is subject to O-(pantetheine 4'-phosphoryl)serine. The tract at residues 3862–3892 is disordered; that stretch reads EKLQHSSASSSSSSSSSSSAGSSSTQRPRKT. A compositionally biased stretch (low complexity) spans 3867-3885; the sequence is SSASSSSSSSSSSSAGSSS. The interval 3899–4145 is reductase (RED) domain; it reads LTGATGFLGG…LDFGQVDKVV (247 aa).

The protein in the C-terminal section; belongs to the NRP synthetase family.

The protein operates within secondary metabolite biosynthesis. Functionally, hybrid PKS-NRPS synthetase; part of the gene cluster that mediates the biosynthesis of tenellin-type 2-pyridones, iron-chelating compounds involved in iron stress tolerance, competition with the natural competitor fungus Metarhizium robertsii and insect hosts infection. TenS catalyzes the assembly of the polyketide-amino acid backbone. Because tenS lacks a designated enoylreductase (ER) domain, the required activity is provided the enoyl reductase tenC. Upon formation of the polyketide backbone on the thiotemplate, the triketide is transferred to the NRPS module and linked to tyrosine to produce the pyrrolidine-2-dione intermediates, including pretellinin A, 11-hydropretellenin A, 12-hydropretellenin A, 13-hydropretellenin A, 14-hydropretellenin A, 12-oxopretellenin A and prototellinin D. The pathway begins with the assembly of the polyketide-amino acid backbone by the hybrid PKS-NRPS tenS with the help of the enoyl reductase tenC. These enzymes catalyze the synthesis of the pyrrolidine-2-dione intermediates pretellinin A, 11-hydropretellenin A, 12-hydropretellenin A, 13-hydropretellenin A, 14-hydropretellenin A, 12-oxopretellenin A and prototellinin D. The cytochrome P450 monooxygenase tenA then catalyzes an oxidative ring expansion of pretenellin A and 14-hydropretellenin A to form the 2-pyridone core, leading to pretenellin B and pyridovericin, respectively. The cytochrome P450 monooxygenase tenB is then required for the selective N-hydroxylation of the 2-pyridone nitrogen of yield tellinin and 15-hydroxytellenin (15-HT), respectively. The UDP-glucosyltransferase GT1 and the methyltransferase MT1, located outside the tenS gene cluster, contribute to the stepwise glycosylation and methylation of 15-HT to obtain the glycoside pyridovericin-N-O-(4-O-methyl-beta-D-glucopyranoside) (PMGP). Additional related compounds such as 1-O-methyl-15-HT, (8Z)-1-O-methyl-15-HT, and O-methyltenellin A are also produced but the enzymes involved in their biosynthesis have still to be determined. In Beauveria bassiana (White muscardine disease fungus), this protein is Tenellin synthetase.